A 295-amino-acid chain; its full sequence is Tyrosine recombinase XerD (295 aa).

Positions 1-85 (METIIEEYLR…TIRSFHQFAI (85 aa)) constitute a Core-binding (CB) domain. In terms of domain architecture, Tyr recombinase spans 106 to 289 (KLPDVLNVDE…SKSQIRKMYN (184 aa)). Residues Arg-146, Lys-170, His-241, Arg-244, and His-267 contribute to the active site. Tyr-276 serves as the catalytic O-(3'-phospho-DNA)-tyrosine intermediate.

The protein belongs to the 'phage' integrase family. XerD subfamily. In terms of assembly, forms a cyclic heterotetrameric complex composed of two molecules of XerC and two molecules of XerD.

It localises to the cytoplasm. In terms of biological role, site-specific tyrosine recombinase, which acts by catalyzing the cutting and rejoining of the recombining DNA molecules. The XerC-XerD complex is essential to convert dimers of the bacterial chromosome into monomers to permit their segregation at cell division. It also contributes to the segregational stability of plasmids. The polypeptide is Tyrosine recombinase XerD (Staphylococcus aureus (strain COL)).